The sequence spans 213 residues: Vacuolar protein sorting-associated protein 32 homolog 1 (213 aa).

2 coiled-coil regions span residues 11–42 (KQET…KKAT) and 118–176 (TNID…QLLQ). Positions 180-213 (IHVPQGNKPARAPAQKQPTAEEDELAALQAEMAL) are disordered.

Belongs to the SNF7 family. Component of the endosomal sorting required for transport complex III (ESCRT-III), composed at least of VPS2, VPS20, VPS24 and VPS32. Interacts with SKD1. Interacts with BRO1/ALIX.

It is found in the endosome. In terms of biological role, component of the ESCRT-III complex, which is required for multivesicular bodies (MVBs) formation and sorting of endosomal cargo proteins into MVBs. The ESCRT-III complex is probably involved in the concentration of MVB cargo. The protein is Vacuolar protein sorting-associated protein 32 homolog 1 (VPS32.1) of Arabidopsis thaliana (Mouse-ear cress).